The sequence spans 155 residues: Endoribonuclease YbeY (155 aa).

3 residues coordinate Zn(2+): His-116, His-120, and His-126.

The protein belongs to the endoribonuclease YbeY family. Zn(2+) serves as cofactor.

It localises to the cytoplasm. Its function is as follows. Single strand-specific metallo-endoribonuclease involved in late-stage 70S ribosome quality control and in maturation of the 3' terminus of the 16S rRNA. The chain is Endoribonuclease YbeY from Thermobifida fusca (strain YX).